The chain runs to 1154 residues: uncharacterized protein (1154 aa).

The first 18 residues, 1-18 (MKRNIFIKLLISLLLLSS), serve as a signal peptide directing secretion. Cys19 carries the N-palmitoyl cysteine lipid modification. Cys19 carries S-diacylglycerol cysteine lipidation. A run of 4 helical transmembrane segments spans residues 288-308 (ISVSAILTLYIMFTGLSFLIG), 394-414 (LGFIYIILYLIALYFIFFLIF), 423-443 (ALITIGMMIIMGPIFICFMLF), and 458-478 (ISYALQPIILFAGIAFISMII).

This sequence belongs to the TrbL/VirB6 family.

It is found in the cell membrane. This is an uncharacterized protein from Rickettsia typhi (strain ATCC VR-144 / Wilmington).